The sequence spans 689 residues: MSNKQIFLKFKSGEIILNNFNKYTDSISSKLLFYQNIKNQENNSGNENYKNFNYNYKNKNNYNNNNNNNNSNSSSNNNGSNNNIKFNSLFISSIYLYNNNNSNNNDLKNDKNDNSIGNINKIIKPKIEIQDLLNPFEAIKEIVGNKEDEEINLVKIGIRVLELGLILLPSVLTFPCCFIPGVKELWWQLLLETIQFSGTCWIKFGQWISTRPDLFPDLLIEKFSQLHSQCPSHSFQFTNESIENSFNGKSIKDLFLWFDEEPMASGSVAQVHKALTMDGKVAVVKVLHPNVKSNIKRDFFIIYSLIWAFSHIPEMKWLSLPESILEFGKSMMKQADLELEASHLNRFNSNFKYNSEVIFPKPLYPLVSKEVLVESFEPGSPIMDFIKKNDHHNPTLAKIGLSAYMQMMLVDNFVHADLHPGNVLVRTSDDDNFKSIDNNYFKKYNNDNDQQQQQQYNLPFKRKLYDTIEKSHKKFDSMLGGIQLKSIDFKEHQKSSPKLIFLDVGLVTQLGQQDKDHFIELFTEIVNGNGKEGAELLIRYAREAKCTEEEMYQFKERMGTLFNQVQNSKLSEVHVGQFMSEILGLVREYHVKIESNFATLVMGTIVLEGLGKQLDPSLGLLKAAIPFLLKSQVFSFSNFIKDFFLKSKTSKKQLNNDNNNNNNNNNNNKNNNDNNNKNNNNKNNNEKNK.

Positions 42 to 79 (NNSGNENYKNFNYNYKNKNNYNNNNNNNNSNSSSNNNG) are disordered. Positions 257-689 (WFDEEPMASG…NNKNNNEKNK (433 aa)) constitute a Protein kinase domain. ATP contacts are provided by residues 263-271 (MASGSVAQV) and Lys-285. Asp-417 functions as the Proton acceptor in the catalytic mechanism. Positions 652–689 (KQLNNDNNNNNNNNNNNKNNNDNNNKNNNNKNNNEKNK) are disordered. The segment covering 655–683 (NNDNNNNNNNNNNNKNNNDNNNKNNNNKN) has biased composition (low complexity).

This sequence belongs to the protein kinase superfamily. ADCK protein kinase family.

The protein is Probable serine/threonine-protein kinase abkC (abkC) of Dictyostelium discoideum (Social amoeba).